The primary structure comprises 324 residues: tRNA pseudouridine synthase B (324 aa).

D49 functions as the Nucleophile in the catalytic mechanism.

It belongs to the pseudouridine synthase TruB family. Type 1 subfamily.

It carries out the reaction uridine(55) in tRNA = pseudouridine(55) in tRNA. Functionally, responsible for synthesis of pseudouridine from uracil-55 in the psi GC loop of transfer RNAs. The sequence is that of tRNA pseudouridine synthase B from Brucella anthropi (strain ATCC 49188 / DSM 6882 / CCUG 24695 / JCM 21032 / LMG 3331 / NBRC 15819 / NCTC 12168 / Alc 37) (Ochrobactrum anthropi).